A 228-amino-acid chain; its full sequence is L-ribulose-5-phosphate 4-epimerase UlaF (228 aa).

Substrate is bound by residues 26–27 (GN), 43–44 (SG), and 72–73 (SS). Zn(2+) contacts are provided by aspartate 74, histidine 93, and histidine 95. Residue aspartate 118 is the Proton donor/acceptor of the active site. Histidine 167 provides a ligand contact to Zn(2+). The active-site Proton donor/acceptor is tyrosine 225.

The protein belongs to the aldolase class II family. AraD/FucA subfamily. The cofactor is Zn(2+).

It catalyses the reaction L-ribulose 5-phosphate = D-xylulose 5-phosphate. It functions in the pathway cofactor degradation; L-ascorbate degradation; D-xylulose 5-phosphate from L-ascorbate: step 4/4. Its function is as follows. Catalyzes the isomerization of L-ribulose 5-phosphate to D-xylulose 5-phosphate. Is involved in the anaerobic L-ascorbate utilization. This is L-ribulose-5-phosphate 4-epimerase UlaF from Escherichia coli O81 (strain ED1a).